The primary structure comprises 958 residues: Eukaryotic translation initiation factor 3 subunit A (958 aa).

Residues 93-123 adopt a coiled-coil conformation; the sequence is MHLATERAELARNQAQALEEALDVEDLEADK. The PCI domain maps to 316-513; sequence LQLIASSVVL…GLSSLVNRVL (198 aa). Coiled-coil stretches lie at residues 548 to 696 and 796 to 861; these read EALS…AKRE and LRSE…LRKS. The segment covering 804-859 has biased composition (basic and acidic residues); it reads KRLQEEEEARKREEAERRKKEEAERQAKLDEIAEKQRRRMLELEEKEKREREEILR. The segment at 804–958 is disordered; it reads KRLQEEEEAR…SRTSWPASRR (155 aa). Residues 877 to 894 are compositionally biased toward low complexity; it reads PAELGGAAPIPAAAATAP. A compositionally biased stretch (basic and acidic residues) spans 929-942; it reads KPDDRPSWRDERKP. Over residues 946-958 the composition is skewed to polar residues; sequence GSGSRTSWPASRR.

It belongs to the eIF-3 subunit A family. Component of the eukaryotic translation initiation factor 3 (eIF-3) complex.

It is found in the cytoplasm. Its function is as follows. RNA-binding component of the eukaryotic translation initiation factor 3 (eIF-3) complex, which is involved in protein synthesis of a specialized repertoire of mRNAs and, together with other initiation factors, stimulates binding of mRNA and methionyl-tRNAi to the 40S ribosome. The eIF-3 complex specifically targets and initiates translation of a subset of mRNAs involved in cell proliferation. This chain is Eukaryotic translation initiation factor 3 subunit A (TIF3A1), found in Nicotiana tabacum (Common tobacco).